A 494-amino-acid polypeptide reads, in one-letter code: MIPVVALVGRPNVGKSTLFNRLTHTRDALVADFPGLTRDRKYGRAEVEGNEFIIVDTGGIDGTEDGVETRMAGQSLLAIEEADIVLFMVDARAGLMPADLGIAQHLRNRQKATFLVANKTDGMDPDMAAADFYSLGLGDVHPIAASHGRGVAQLIEHVLVPFVGEKPEEVELTEEEANAAYWAEQEGETLEGAEEEPEDDFNPQDLPIKLAIVGRPNVGKSTLTNRILGEDRVVVYDMPGTTRDSIYIPMVRDEREYVLIDTAGVRKRGKVTETVEKFSVIKTLQAIEDANVVLLVVDAREGISDQDLSLLGFILNSGRSLVIVVNKWDGMSEEDRDHVKEMLDLRLGFVDFARIHFISALHGSGVGNLFVSVLEAYECATRRVNTSMLTKIMQMAADDHQPPLVRGRRVKLKYAHAGGYNPPIVVIHGNQVTDLSDSYKRYLMNYFRRSLKVMGTPIRIQFKEGENPFAGKRNLLTPNQMRKRKRLMSHLKKG.

2 EngA-type G domains span residues 3 to 166 (PVVA…VGEK) and 208 to 381 (IKLA…ECAT). GTP-binding positions include 9-16 (GRPNVGKS), 56-60 (DTGGI), 118-121 (NKTD), 214-221 (GRPNVGKS), 261-265 (DTAGV), and 326-329 (NKWD). One can recognise a KH-like domain in the interval 382–466 (RRVNTSMLTK…PIRIQFKEGE (85 aa)).

Belongs to the TRAFAC class TrmE-Era-EngA-EngB-Septin-like GTPase superfamily. EngA (Der) GTPase family. In terms of assembly, associates with the 50S ribosomal subunit.

Functionally, GTPase that plays an essential role in the late steps of ribosome biogenesis. The protein is GTPase Der of Serratia proteamaculans (strain 568).